Consider the following 497-residue polypeptide: uncharacterized protein (497 aa).

Residues 474 to 497 form a disordered region; that stretch reads DPRNPFSNGKPSGWSDEDVAWLKR. The span at 488 to 497 shows a compositional bias: acidic residues; sequence SDEDVAWLKR.

This is an uncharacterized protein from Bacillus anthracis.